The following is a 233-amino-acid chain: MRVITVKNDIEGGKIAFTLLEEKMKAGAQTLGLATGSSPITFYEEIVKSNLDFSNMVSINLDEYVGIAASNDQSYSYFMHKHLFDAKPFKENNLPNGLAKDLKEEIKRYDAVINANPIDFQILGIGRNGHIGFNEPGTPFDITTHVVDLAPSTIEANSRFFNSIDDVPKQALSMGIGSIMKSKTIVLVAYGIEKAEAIASMIKGPITEDMPASILQKHDDVVIIVDEAAASKL.

Catalysis depends on D62, which acts as the Proton acceptor; for enolization step. Catalysis depends on N128, which acts as the For ring-opening step. The active-site Proton acceptor; for ring-opening step is H130. E135 functions as the For ring-opening step in the catalytic mechanism.

The protein belongs to the glucosamine/galactosamine-6-phosphate isomerase family. NagB subfamily.

It carries out the reaction alpha-D-glucosamine 6-phosphate + H2O = beta-D-fructose 6-phosphate + NH4(+). Its pathway is amino-sugar metabolism; N-acetylneuraminate degradation; D-fructose 6-phosphate from N-acetylneuraminate: step 5/5. Functionally, catalyzes the reversible isomerization-deamination of glucosamine 6-phosphate (GlcN6P) to form fructose 6-phosphate (Fru6P) and ammonium ion. The sequence is that of Glucosamine-6-phosphate deaminase from Streptococcus agalactiae serotype Ia (strain ATCC 27591 / A909 / CDC SS700).